We begin with the raw amino-acid sequence, 324 residues long: tRNA uridine(34) hydroxylase (324 aa).

Positions 122–218 (QENRCLILDV…YGQQVGTGKW (97 aa)) constitute a Rhodanese domain. Cysteine 178 acts as the Cysteine persulfide intermediate in catalysis.

Belongs to the TrhO family.

It carries out the reaction uridine(34) in tRNA + AH2 + O2 = 5-hydroxyuridine(34) in tRNA + A + H2O. In terms of biological role, catalyzes oxygen-dependent 5-hydroxyuridine (ho5U) modification at position 34 in tRNAs. The sequence is that of tRNA uridine(34) hydroxylase from Chlamydia pneumoniae (Chlamydophila pneumoniae).